Consider the following 375-residue polypeptide: V-type proton ATPase subunit C (375 aa).

The protein belongs to the V-ATPase C subunit family. As to quaternary structure, V-ATPase is a heteromultimeric enzyme composed of a peripheral catalytic V1 complex (components A to H) attached to an integral membrane V0 proton pore complex (components: a, c, c'', d and e). Post-translationally, phosphorylated on Ser/Thr residues by WNK8.

Its subcellular location is the vacuole membrane. Its function is as follows. Subunit of the peripheral V1 complex of vacuolar ATPase. Subunit C is necessary for the assembly of the catalytic sector of the enzyme and is likely to have a specific function in its catalytic activity. V-ATPase is responsible for acidifying a variety of intracellular compartments in eukaryotic cells. In Arabidopsis thaliana (Mouse-ear cress), this protein is V-type proton ATPase subunit C (VHA-C).